A 384-amino-acid chain; its full sequence is Chorismate synthase (384 aa).

Residues R40 and R46 each contribute to the NADP(+) site. Residues 127–129 (RTS), 247–248 (QA), A292, 307–311 (KPIPT), and R333 contribute to the FMN site.

The protein belongs to the chorismate synthase family. Homotetramer. FMNH2 is required as a cofactor.

The enzyme catalyses 5-O-(1-carboxyvinyl)-3-phosphoshikimate = chorismate + phosphate. It functions in the pathway metabolic intermediate biosynthesis; chorismate biosynthesis; chorismate from D-erythrose 4-phosphate and phosphoenolpyruvate: step 7/7. Its function is as follows. Catalyzes the anti-1,4-elimination of the C-3 phosphate and the C-6 proR hydrogen from 5-enolpyruvylshikimate-3-phosphate (EPSP) to yield chorismate, which is the branch point compound that serves as the starting substrate for the three terminal pathways of aromatic amino acid biosynthesis. This reaction introduces a second double bond into the aromatic ring system. The protein is Chorismate synthase of Alkaliphilus oremlandii (strain OhILAs) (Clostridium oremlandii (strain OhILAs)).